The following is a 100-amino-acid chain: Large ribosomal subunit protein uL23 (100 aa).

This sequence belongs to the universal ribosomal protein uL23 family. As to quaternary structure, part of the 50S ribosomal subunit. Contacts protein L29, and trigger factor when it is bound to the ribosome.

One of the early assembly proteins it binds 23S rRNA. One of the proteins that surrounds the polypeptide exit tunnel on the outside of the ribosome. Forms the main docking site for trigger factor binding to the ribosome. In Sodalis glossinidius (strain morsitans), this protein is Large ribosomal subunit protein uL23.